The chain runs to 246 residues: tRNA (guanine-N(1)-)-methyltransferase (246 aa).

S-adenosyl-L-methionine-binding positions include G117 and 137 to 142 (IGDYVL).

It belongs to the RNA methyltransferase TrmD family. Homodimer.

The protein resides in the cytoplasm. The enzyme catalyses guanosine(37) in tRNA + S-adenosyl-L-methionine = N(1)-methylguanosine(37) in tRNA + S-adenosyl-L-homocysteine + H(+). In terms of biological role, specifically methylates guanosine-37 in various tRNAs. The protein is tRNA (guanine-N(1)-)-methyltransferase of Acinetobacter baumannii (strain AB307-0294).